Reading from the N-terminus, the 559-residue chain is Probable D-2-hydroxyglutarate dehydrogenase, mitochondrial (559 aa).

The transit peptide at 1 to 80 directs the protein to the mitochondrion; that stretch reads MARRAAAGLL…MNFEVQKRSF (80 aa). An FAD-binding PCMH-type domain is found at 131 to 310; the sequence is YKGSSQLLLL…TKIAILTPAK (180 aa).

Belongs to the FAD-binding oxidoreductase/transferase type 4 family. Homodimer. FAD serves as cofactor.

The protein localises to the mitochondrion. It carries out the reaction (R)-2-hydroxyglutarate + A = 2-oxoglutarate + AH2. Its function is as follows. Catalyzes the oxidation of D-2-hydroxyglutarate to alpha-ketoglutarate. The polypeptide is Probable D-2-hydroxyglutarate dehydrogenase, mitochondrial (D2HGDH) (Oryza sativa subsp. indica (Rice)).